A 54-amino-acid polypeptide reads, in one-letter code: Conotoxin Cal6.17 (54 aa).

The N-terminal stretch at 1–19 (MSGTGVLLLTLLLLVTMAT) is a signal peptide. 3 cysteine pairs are disulfide-bonded: C24–C39, C32–C49, and C38–C53.

Expressed by the venom duct.

It is found in the secreted. Functionally, probable neurotoxin. This Californiconus californicus (California cone) protein is Conotoxin Cal6.17.